Reading from the N-terminus, the 100-residue chain is MHLTSREQEKLMLFLAGELAAKRKARGVKLNYPETIAYIASHLQEAAREGMSVAEVMQYGATLLTVDDVMEGVAEMVHEVQIEATFPDGTKLVTVHNPIR.

This sequence belongs to the urease gamma subunit family. As to quaternary structure, heterotrimer of UreA (gamma), UreB (beta) and UreC (alpha) subunits. Three heterotrimers associate to form the active enzyme.

It is found in the cytoplasm. It carries out the reaction urea + 2 H2O + H(+) = hydrogencarbonate + 2 NH4(+). It functions in the pathway nitrogen metabolism; urea degradation; CO(2) and NH(3) from urea (urease route): step 1/1. This is Urease subunit gamma from Haemophilus influenzae (strain ATCC 51907 / DSM 11121 / KW20 / Rd).